Consider the following 431-residue polypeptide: Glutamyl-tRNA(Gln) amidotransferase subunit A (431 aa).

Active-site charge relay system residues include lysine 55 and serine 130. The active-site Acyl-ester intermediate is the serine 154.

The protein belongs to the amidase family. GatA subfamily. In terms of assembly, heterotrimer of A, B and C subunits.

It carries out the reaction L-glutamyl-tRNA(Gln) + L-glutamine + ATP + H2O = L-glutaminyl-tRNA(Gln) + L-glutamate + ADP + phosphate + H(+). Its function is as follows. Allows the formation of correctly charged Gln-tRNA(Gln) through the transamidation of misacylated Glu-tRNA(Gln) in organisms which lack glutaminyl-tRNA synthetase. The reaction takes place in the presence of glutamine and ATP through an activated gamma-phospho-Glu-tRNA(Gln). The sequence is that of Glutamyl-tRNA(Gln) amidotransferase subunit A from Methanococcus vannielii (strain ATCC 35089 / DSM 1224 / JCM 13029 / OCM 148 / SB).